A 237-amino-acid chain; its full sequence is Protein GrpE (237 aa).

The tract at residues 1–65 is disordered; that stretch reads MTDSYKLPDN…DAREDDRDPT (65 aa). Residues 55 to 65 are compositionally biased toward basic and acidic residues; the sequence is VDAREDDRDPT.

It belongs to the GrpE family. As to quaternary structure, homodimer.

It localises to the cytoplasm. Functionally, participates actively in the response to hyperosmotic and heat shock by preventing the aggregation of stress-denatured proteins, in association with DnaK and GrpE. It is the nucleotide exchange factor for DnaK and may function as a thermosensor. Unfolded proteins bind initially to DnaJ; upon interaction with the DnaJ-bound protein, DnaK hydrolyzes its bound ATP, resulting in the formation of a stable complex. GrpE releases ADP from DnaK; ATP binding to DnaK triggers the release of the substrate protein, thus completing the reaction cycle. Several rounds of ATP-dependent interactions between DnaJ, DnaK and GrpE are required for fully efficient folding. The chain is Protein GrpE from Corynebacterium efficiens (strain DSM 44549 / YS-314 / AJ 12310 / JCM 11189 / NBRC 100395).